A 430-amino-acid polypeptide reads, in one-letter code: Trigger factor (430 aa).

The PPIase FKBP-type domain occupies 163-248 (GNIAIIDFKG…IKDIKVKELP (86 aa)).

Belongs to the FKBP-type PPIase family. Tig subfamily.

The protein localises to the cytoplasm. It catalyses the reaction [protein]-peptidylproline (omega=180) = [protein]-peptidylproline (omega=0). Involved in protein export. Acts as a chaperone by maintaining the newly synthesized protein in an open conformation. Functions as a peptidyl-prolyl cis-trans isomerase. This chain is Trigger factor, found in Clostridium botulinum (strain Okra / Type B1).